Reading from the N-terminus, the 509-residue chain is Coiled-coil domain-containing protein 181 (509 aa).

Basic and acidic residues predominate over residues 60–82 (EHTKQHSDPDKSLQDDVSPRRND). 2 disordered regions span residues 60-121 (EHTK…EEDE) and 285-367 (GEPL…EEKE). Over residues 320-334 (RTQSARISPVTSTYC) the composition is skewed to polar residues. Residues 335–375 (LSPRQKELQKQLEQKREKLKREEEQRKIEEEKEKKRENDIV) are a coiled coil. Residues 338–367 (RQKELQKQLEQKREKLKREEEQRKIEEEKE) show a composition bias toward basic and acidic residues.

This sequence belongs to the CCDC181 family. Homodimer. Interacts with HOOK1. Interacts with HOOK2. Interacts with HOOK3.

It localises to the cytoplasm. It is found in the cytoskeleton. Its subcellular location is the cell projection. The protein resides in the cilium. The protein localises to the flagellum. In terms of biological role, microtubule-binding protein that localizes to the microtubular manchette of elongating spermatids. In Macaca fascicularis (Crab-eating macaque), this protein is Coiled-coil domain-containing protein 181.